The primary structure comprises 375 residues: Isopentenyl-diphosphate delta-isomerase (375 aa).

Substrate is bound at residue 8–9; sequence RK. Residues threonine 65, 66-68, serine 96, and asparagine 125 each bind FMN; that span reads GMT. 96 to 98 is a binding site for substrate; that stretch reads SQR. Substrate is bound at residue glutamine 160. Position 161 (glutamate 161) interacts with Mg(2+). Residues lysine 192, threonine 222, 273 to 275, and 294 to 295 each bind FMN; these read GVR and AL.

This sequence belongs to the IPP isomerase type 2 family. As to quaternary structure, homooctamer. Dimer of tetramers. Requires FMN as cofactor. The cofactor is NADPH. Mg(2+) serves as cofactor.

It is found in the cytoplasm. The enzyme catalyses isopentenyl diphosphate = dimethylallyl diphosphate. Its function is as follows. Involved in the biosynthesis of isoprenoids. Catalyzes the 1,3-allylic rearrangement of the homoallylic substrate isopentenyl (IPP) to its allylic isomer, dimethylallyl diphosphate (DMAPP). The protein is Isopentenyl-diphosphate delta-isomerase of Aeropyrum pernix (strain ATCC 700893 / DSM 11879 / JCM 9820 / NBRC 100138 / K1).